The following is a 405-amino-acid chain: Argininosuccinate synthase (405 aa).

Residues 10-18 and alanine 37 contribute to the ATP site; that span reads AYSGGLDTS. L-citrulline-binding residues include tyrosine 88 and serine 93. Residue glycine 118 participates in ATP binding. Residues threonine 120, asparagine 124, and aspartate 125 each contribute to the L-aspartate site. Position 124 (asparagine 124) interacts with L-citrulline. Arginine 128, serine 179, serine 188, glutamate 264, and tyrosine 276 together coordinate L-citrulline.

Belongs to the argininosuccinate synthase family. Type 1 subfamily. Homotetramer.

The protein resides in the cytoplasm. It catalyses the reaction L-citrulline + L-aspartate + ATP = 2-(N(omega)-L-arginino)succinate + AMP + diphosphate + H(+). It participates in amino-acid biosynthesis; L-arginine biosynthesis; L-arginine from L-ornithine and carbamoyl phosphate: step 2/3. The protein is Argininosuccinate synthase of Pseudomonas syringae pv. syringae (strain B728a).